Here is a 313-residue protein sequence, read N- to C-terminus: Aspartate carbamoyltransferase catalytic subunit (313 aa).

The carbamoyl phosphate site is built by arginine 58 and threonine 59. Lysine 86 is a binding site for L-aspartate. The carbamoyl phosphate site is built by arginine 108, histidine 136, and glutamine 139. L-aspartate is bound by residues arginine 169 and arginine 224. Positions 265 and 266 each coordinate carbamoyl phosphate.

This sequence belongs to the aspartate/ornithine carbamoyltransferase superfamily. ATCase family. In terms of assembly, heterododecamer (2C3:3R2) of six catalytic PyrB chains organized as two trimers (C3), and six regulatory PyrI chains organized as three dimers (R2).

It catalyses the reaction carbamoyl phosphate + L-aspartate = N-carbamoyl-L-aspartate + phosphate + H(+). The protein operates within pyrimidine metabolism; UMP biosynthesis via de novo pathway; (S)-dihydroorotate from bicarbonate: step 2/3. Catalyzes the condensation of carbamoyl phosphate and aspartate to form carbamoyl aspartate and inorganic phosphate, the committed step in the de novo pyrimidine nucleotide biosynthesis pathway. The chain is Aspartate carbamoyltransferase catalytic subunit from Natranaerobius thermophilus (strain ATCC BAA-1301 / DSM 18059 / JW/NM-WN-LF).